The chain runs to 610 residues: Menin (610 aa).

The segment at 214–390 (GVAERSWLYL…SLLEAGEERP (177 aa)) is interaction with FANCD2. Residues 460-552 (REAEAAEAEE…SPPPEGPVLT (93 aa)) are disordered. Residues 484 to 500 (RRESKPEEPPPPKKPAL) are compositionally biased toward basic and acidic residues. Residues Ser487 and Ser543 each carry the phosphoserine modification. Phosphothreonine is present on Thr594.

In terms of assembly, component of the MLL-HCF complex, at least composed of KMT2A/MLL1, MEN1, ASH2L, RBBP5, DPY30, WDR5, HCFC1 and HCFC2. Component of the menin-associated histone methyltransferase complex, at least composed of KMT2B/MLL4, MEN1, ASH2L, RBBP5, DPY30 and WDR5. Interacts with POLR2B. Interacts with POLR2A phosphorylated at 'Ser-5', but not with the unphosphorylated, nor 'Ser-2' phosphorylated POLR2A forms. Interacts with FANCD2 and DBF4. Interacts with SMAD3, but not with SMAD2, nor SMAD4. Directly interacts with NFKB1, NFKB2 and RELA. Interacts with JUND (via MBM motif); inhibits the interaction of JUND with MAPK10 and the phosphorylation of JUND by MAP kinases MAPK8 and MAPK10. Interacts with KMT2A (via MBM motif). The KMT2A-MEN1 complex interacts with PSIP1 with a greater affinity as MEN1 enhances interaction of KMT2A with PSIP1. In terms of tissue distribution, widely expressed, including in the pituitary, brain, large intestine, spleen, kidney, adrenal gland, ovary, testis, thymus, lung, epididymis, bone marrow, pancreatic islets and placenta.

The protein resides in the nucleus. Functionally, essential component of a MLL/SET1 histone methyltransferase (HMT) complex, a complex that specifically methylates 'Lys-4' of histone H3 (H3K4). Functions as a transcriptional regulator. Binds to the TERT promoter and represses telomerase expression. Represses JUND-mediated transcriptional activation on AP1 sites, as well as that mediated by NFKB subunit RELA. Positively regulates HOXC8 and HOXC6 gene expression. May be involved in normal hematopoiesis through the activation of HOXA9 expression. May be involved in DNA repair. Plays a role in TGFB1-mediated inhibition of cell-proliferation, possibly regulating SMAD3 transcriptional activity. This chain is Menin (Men1), found in Rattus norvegicus (Rat).